The chain runs to 378 residues: MSKRDYYEVLGVGRDASEREIKKAYKRLAMKFHPDRNPGDKAAEASFKEVKEAYEILTDANKKAAYDQFGHAGVDPNRGGGGGYGGAGDFGDIFGDVFGDIFGGGRRGGGQRQAARGSDLRYNLELSLEEAVKGLTKELRIPTLASCDVCDGSGAKKGTSATTCTTCHGQGQVQMRQGFFTVQQPCPTCHGRGKIIKDPCAKCHGDGRVEKTKTLSVKIPAGVDTGDRIRLAGEGEAGEFGAPAGDLYVQVSVREHAIFVRDGNNLYCEVPISFSKAALGGEIEVPTLDGKVSLKIPAETQTGRMFRLRGKGVKSVRSHAVGDLLCKVVMETPVNLNERQKELLREFEATLTGESKKHSPKAEGFFDGVKKFFQDLNS.

In terms of domain architecture, J spans 5 to 70; it reads DYYEVLGVGR…NKKAAYDQFG (66 aa). The segment at 134–212 adopts a CR-type zinc-finger fold; that stretch reads GLTKELRIPT…CHGDGRVEKT (79 aa). Cys-147, Cys-150, Cys-164, Cys-167, Cys-186, Cys-189, Cys-200, and Cys-203 together coordinate Zn(2+). CXXCXGXG motif repeat units lie at residues 147-154, 164-171, 186-193, and 200-207; these read CDVCDGSG, CTTCHGQG, CPTCHGRG, and CAKCHGDG.

It belongs to the DnaJ family. In terms of assembly, homodimer. It depends on Zn(2+) as a cofactor.

The protein localises to the cytoplasm. Functionally, participates actively in the response to hyperosmotic and heat shock by preventing the aggregation of stress-denatured proteins and by disaggregating proteins, also in an autonomous, DnaK-independent fashion. Unfolded proteins bind initially to DnaJ; upon interaction with the DnaJ-bound protein, DnaK hydrolyzes its bound ATP, resulting in the formation of a stable complex. GrpE releases ADP from DnaK; ATP binding to DnaK triggers the release of the substrate protein, thus completing the reaction cycle. Several rounds of ATP-dependent interactions between DnaJ, DnaK and GrpE are required for fully efficient folding. Also involved, together with DnaK and GrpE, in the DNA replication of plasmids through activation of initiation proteins. The chain is Chaperone protein DnaJ from Shewanella oneidensis (strain ATCC 700550 / JCM 31522 / CIP 106686 / LMG 19005 / NCIMB 14063 / MR-1).